The following is a 496-amino-acid chain: UDP-N-acetylmuramoyl-L-alanyl-D-glutamate--2,6-diaminopimelate ligase (496 aa).

The UDP-N-acetyl-alpha-D-muramoyl-L-alanyl-D-glutamate site is built by leucine 24 and serine 26. 109 to 115 (GTNGKTS) serves as a coordination point for ATP. UDP-N-acetyl-alpha-D-muramoyl-L-alanyl-D-glutamate contacts are provided by residues 151 to 152 (TT), serine 178, glutamine 184, and arginine 186. Lysine 218 is modified (N6-carboxylysine). Residues arginine 387, 411 to 414 (DNPR), glycine 462, and glutamate 466 each bind meso-2,6-diaminopimelate. Residues 411-414 (DNPR) carry the Meso-diaminopimelate recognition motif motif.

Belongs to the MurCDEF family. MurE subfamily. Mg(2+) is required as a cofactor. Carboxylation is probably crucial for Mg(2+) binding and, consequently, for the gamma-phosphate positioning of ATP.

The protein localises to the cytoplasm. The catalysed reaction is UDP-N-acetyl-alpha-D-muramoyl-L-alanyl-D-glutamate + meso-2,6-diaminopimelate + ATP = UDP-N-acetyl-alpha-D-muramoyl-L-alanyl-gamma-D-glutamyl-meso-2,6-diaminopimelate + ADP + phosphate + H(+). It functions in the pathway cell wall biogenesis; peptidoglycan biosynthesis. Its function is as follows. Catalyzes the addition of meso-diaminopimelic acid to the nucleotide precursor UDP-N-acetylmuramoyl-L-alanyl-D-glutamate (UMAG) in the biosynthesis of bacterial cell-wall peptidoglycan. The sequence is that of UDP-N-acetylmuramoyl-L-alanyl-D-glutamate--2,6-diaminopimelate ligase from Pseudomonas putida (strain ATCC 47054 / DSM 6125 / CFBP 8728 / NCIMB 11950 / KT2440).